A 201-amino-acid polypeptide reads, in one-letter code: Peroxiredoxin 2 (201 aa).

In terms of domain architecture, Thioredoxin spans 3–156 (VYLGKRAPDF…ILRSVKALQA (154 aa)). Residue Cys-44 is the Cysteine sulfenic acid (-SOH) intermediate of the active site. Substrate is bound at residue Arg-119.

This sequence belongs to the peroxiredoxin family. Prx6 subfamily. In terms of assembly, homodecamer. Pentamer of dimers that assemble into a ring structure.

Its subcellular location is the cytoplasm. It catalyses the reaction a hydroperoxide + [thioredoxin]-dithiol = an alcohol + [thioredoxin]-disulfide + H2O. Thiol-specific peroxidase that catalyzes the reduction of hydrogen peroxide and organic hydroperoxides to water and alcohols, respectively. Plays a role in cell protection against oxidative stress by detoxifying peroxides. The sequence is that of Peroxiredoxin 2 from Picrophilus torridus (strain ATCC 700027 / DSM 9790 / JCM 10055 / NBRC 100828 / KAW 2/3).